The primary structure comprises 730 residues: Polyphosphate kinase (730 aa).

The segment covering 1–21 has biased composition (basic and acidic residues); that stretch reads MMRHDRNVTEIDAETRPDENL. The segment at 1-39 is disordered; sequence MMRHDRNVTEIDAETRPDENLWHSGDSAVGAPPAATPAA. Asparagine 86 is a binding site for ATP. Residues arginine 423 and arginine 453 each coordinate Mg(2+). The Phosphohistidine intermediate role is filled by histidine 483. Residues tyrosine 516, arginine 612, and histidine 640 each contribute to the ATP site.

This sequence belongs to the polyphosphate kinase 1 (PPK1) family. The cofactor is Mg(2+). In terms of processing, an intermediate of this reaction is the autophosphorylated ppk in which a phosphate is covalently linked to a histidine residue through a N-P bond.

The enzyme catalyses [phosphate](n) + ATP = [phosphate](n+1) + ADP. In terms of biological role, catalyzes the reversible transfer of the terminal phosphate of ATP to form a long-chain polyphosphate (polyP). This chain is Polyphosphate kinase, found in Mycolicibacterium paratuberculosis (strain ATCC BAA-968 / K-10) (Mycobacterium paratuberculosis).